We begin with the raw amino-acid sequence, 32 residues long: MKILNSVLIACAWWVAQVSAVVVGIHIYYEYF.

This is an uncharacterized protein from Enterobacteria phage T4 (Bacteriophage T4).